Consider the following 245-residue polypeptide: Small ribosomal subunit protein uS2 (245 aa).

The protein belongs to the universal ribosomal protein uS2 family.

This chain is Small ribosomal subunit protein uS2, found in Pseudomonas putida (strain W619).